We begin with the raw amino-acid sequence, 521 residues long: DEAD-box ATP-dependent RNA helicase 1 (521 aa).

The disordered stretch occupies residues 1-20 (MVVAMATKEEEGGPSSRVPH). The Q motif motif lies at 36–65 (CPVAHLPRLDPRLVKPLQRMGIESFFPVQV). Positions 72–302 (IGPGAFERDI…QLELQHPLLL (231 aa)) constitute a Helicase ATP-binding domain. 85 to 92 (SPTGSGKT) contacts ATP. Residues 213-216 (DETD) carry the DEAD box motif. Positions 330 to 480 (SLIVLLQELR…SLPEESVETL (151 aa)) constitute a Helicase C-terminal domain. Basic and acidic residues predominate over residues 495-507 (LESEATKKSKSGD). The tract at residues 495-521 (LESEATKKSKSGDKAPNASKRKRTINT) is disordered.

Belongs to the DEAD box helicase family. DDX51/DBP6 subfamily.

The enzyme catalyses ATP + H2O = ADP + phosphate + H(+). In Oryza sativa subsp. japonica (Rice), this protein is DEAD-box ATP-dependent RNA helicase 1.